A 463-amino-acid polypeptide reads, in one-letter code: Polyadenylate-binding protein-interacting protein 1 (463 aa).

Residues 1-86 are disordered; that stretch reads MSDGFERAPG…HKRTSPAAQL (86 aa). Residues 145 to 362 enclose the MIF4G domain; that stretch reads TEYVQDFLNH…LKLVELRSSN (218 aa). Residues 420–442 are disordered; the sequence is RDYDENGTDGGDSYFEDDDDNEM. Acidic residues predominate over residues 433–442; it reads YFEDDDDNEM.

As to quaternary structure, interacts with the RRM1-RRM2 and C-terminal regions of epabp.

The protein resides in the cytoplasm. Acts as a coactivator in the regulation of translation initiation of poly(A)-containing mRNAs. The polypeptide is Polyadenylate-binding protein-interacting protein 1 (Xenopus laevis (African clawed frog)).